Reading from the N-terminus, the 235-residue chain is Sugar fermentation stimulation protein homolog (235 aa).

Belongs to the SfsA family.

The sequence is that of Sugar fermentation stimulation protein homolog from Ectopseudomonas mendocina (strain ymp) (Pseudomonas mendocina).